The following is a 688-amino-acid chain: PTS system glucoside-specific EIICBA component (688 aa).

Residues 3-427 (KKLFGQLQRI…FKLKTPGRED (425 aa)) form the PTS EIIC type-1 domain. The next 10 helical transmembrane spans lie at 12-32 (IGKA…LLAF), 81-101 (LGLA…YLIM), 137-157 (LVLG…MGAL), 182-202 (FVPI…SFAW), 223-243 (LTTF…LHHI), 284-304 (AFTT…AFAI), 315-335 (VVGG…ITEP), 340-360 (FLFV…TSFL), 364-384 (LLGV…ILYG), and 395-415 (LVIP…DFAI). Residues 438 to 519 (AKLPFDVLDA…AKIMSGEITK (82 aa)) enclose the PTS EIIB type-1 domain. Cysteine 460 functions as the Phosphocysteine intermediate; for EIIB activity in the catalytic mechanism. The 105-residue stretch at 560–664 (DQVFAGKMMG…SIVTPMIITN (105 aa)) folds into the PTS EIIA type-1 domain. Histidine 612 (tele-phosphohistidine intermediate; for EIIA activity) is an active-site residue.

It is found in the cell membrane. Functionally, the phosphoenolpyruvate-dependent sugar phosphotransferase system (sugar PTS), a major carbohydrate active -transport system, catalyzes the phosphorylation of incoming sugar substrates concomitantly with their translocation across the cell membrane. This system is involved in alpha- and beta-glucoside transport. This is PTS system glucoside-specific EIICBA component (glcB) from Staphylococcus aureus (strain JH1).